The sequence spans 470 residues: Uronate isomerase (470 aa).

This sequence belongs to the metallo-dependent hydrolases superfamily. Uronate isomerase family.

It catalyses the reaction D-glucuronate = D-fructuronate. It carries out the reaction aldehydo-D-galacturonate = keto-D-tagaturonate. It functions in the pathway carbohydrate metabolism; pentose and glucuronate interconversion. The sequence is that of Uronate isomerase from Serratia proteamaculans (strain 568).